The following is a 217-amino-acid chain: Small ribosomal subunit protein uS3 (217 aa).

The 69-residue stretch at 38–106 folds into the KH type-2 domain; it reads IRKYIEQRLA…RVHINIIEIK (69 aa).

It belongs to the universal ribosomal protein uS3 family. In terms of assembly, part of the 30S ribosomal subunit. Forms a tight complex with proteins S10 and S14.

Binds the lower part of the 30S subunit head. Binds mRNA in the 70S ribosome, positioning it for translation. The polypeptide is Small ribosomal subunit protein uS3 (Lactiplantibacillus plantarum (strain ATCC BAA-793 / NCIMB 8826 / WCFS1) (Lactobacillus plantarum)).